The sequence spans 224 residues: Phosphoribosylformylglycinamidine synthase subunit PurQ (224 aa).

The Glutamine amidotransferase type-1 domain maps to 2 to 224; it reads KIAVIVFPGS…SLLEEGKVKG (223 aa). Cysteine 86 functions as the Nucleophile in the catalytic mechanism. Residues histidine 195 and glutamate 197 contribute to the active site.

As to quaternary structure, part of the FGAM synthase complex composed of 1 PurL, 1 PurQ and 2 PurS subunits.

The protein resides in the cytoplasm. It catalyses the reaction N(2)-formyl-N(1)-(5-phospho-beta-D-ribosyl)glycinamide + L-glutamine + ATP + H2O = 2-formamido-N(1)-(5-O-phospho-beta-D-ribosyl)acetamidine + L-glutamate + ADP + phosphate + H(+). It carries out the reaction L-glutamine + H2O = L-glutamate + NH4(+). It participates in purine metabolism; IMP biosynthesis via de novo pathway; 5-amino-1-(5-phospho-D-ribosyl)imidazole from N(2)-formyl-N(1)-(5-phospho-D-ribosyl)glycinamide: step 1/2. Functionally, part of the phosphoribosylformylglycinamidine synthase complex involved in the purines biosynthetic pathway. Catalyzes the ATP-dependent conversion of formylglycinamide ribonucleotide (FGAR) and glutamine to yield formylglycinamidine ribonucleotide (FGAM) and glutamate. The FGAM synthase complex is composed of three subunits. PurQ produces an ammonia molecule by converting glutamine to glutamate. PurL transfers the ammonia molecule to FGAR to form FGAM in an ATP-dependent manner. PurS interacts with PurQ and PurL and is thought to assist in the transfer of the ammonia molecule from PurQ to PurL. This is Phosphoribosylformylglycinamidine synthase subunit PurQ from Ligilactobacillus salivarius (strain UCC118) (Lactobacillus salivarius).